The primary structure comprises 840 residues: MTQVTVKELAQVVDTPVERLLLQMRDAGLPHTSAEQVVTDSEKQALLTHLKGSHGDRASEPRKITLQRKTTTTLKVGGSKTVSVEVRKKKTYVKRSPDEIEAERQRELEEQRAAEEAERLKAEEAAARQRAEEEARKAEEAARAKAAQEAAATAGAEPAVVADVAVAEPVAKPAAVEERKKEEPRRVPKRDEDDDRRDRKHTQHRPSVKEKEKVPAPRVAPRSTDEESDGYRRGGRGGKSKLKKRNQHGFQNPTGPIVREVNIGETITVAELAAQMSVKGAEVVKFMFKMGSPVTINQVLDQETAQLVAEELGHKVKLVSENALEEQLAESLKFEGEAVTRAPVVTVMGHVDHGKTSLLDYIRRAKVAAGEAGGITQHIGAYHVETERGMVTFLDTPGHAAFTAMRARGAQATDIVILVVAADDGVMPQTQEAVQHAKAAGVPIVVAVNKIDKPEANPDNIKNGLAALDVIPEEWGGDAPFVPVSAKLGTGVDELLEAVLLQAEVLELKATPSAPGRGVVVESRLDKGRGPVATVLVQDGTLRQGDMVLVGINYGRVRAMLDENGKPIKEAGPSIPVEILGLDGTPDAGDEMTVVADEKKAREVALFRQGKFREVKLARAHAGKLENIFENMGQEEKKTLNIVLKADVRGSLEALQGSLSGLGNDEVQVRVVGGGVGGITESDANLALASNAVLFGFNVRADAGARKIVEAEGLDMRYYNVIYDIIEDVKKALTGMLGSDLRENILGIAEVRDVFRSPKFGAIAGCMVTEGMVHRNRPIRVLRDDVVIFEGELESLRRFKDDVAEVRAGMECGIGVKSYNDVKVGDKIEVFEKVEVARSL.

Basic and acidic residues predominate over residues 95 to 143 (RSPDEIEAERQRELEEQRAAEEAERLKAEEAAARQRAEEEARKAEEAAR). 2 disordered regions span residues 95 to 155 (RSPD…ATAG) and 173 to 256 (PAAV…PTGP). Over residues 144–155 (AKAAQEAAATAG) the composition is skewed to low complexity. Basic and acidic residues-rich tracts occupy residues 175 to 191 (AVEE…PKRD) and 223 to 232 (STDEESDGYR). Residues 233–247 (RGGRGGKSKLKKRNQ) are compositionally biased toward basic residues. The region spanning 340–509 (TRAPVVTVMG…LLQAEVLELK (170 aa)) is the tr-type G domain. Residues 349–356 (GHVDHGKT) form a G1 region. Residue 349–356 (GHVDHGKT) participates in GTP binding. The tract at residues 374–378 (GITQH) is G2. The G3 stretch occupies residues 395–398 (DTPG). Residues 395-399 (DTPGH) and 449-452 (NKID) each bind GTP. A G4 region spans residues 449–452 (NKID). Residues 485–487 (SAK) form a G5 region.

It belongs to the TRAFAC class translation factor GTPase superfamily. Classic translation factor GTPase family. IF-2 subfamily.

The protein resides in the cytoplasm. Functionally, one of the essential components for the initiation of protein synthesis. Protects formylmethionyl-tRNA from spontaneous hydrolysis and promotes its binding to the 30S ribosomal subunits. Also involved in the hydrolysis of GTP during the formation of the 70S ribosomal complex. The protein is Translation initiation factor IF-2 of Pseudomonas aeruginosa (strain ATCC 15692 / DSM 22644 / CIP 104116 / JCM 14847 / LMG 12228 / 1C / PRS 101 / PAO1).